The primary structure comprises 388 residues: Ribosomal RNA large subunit methyltransferase F (388 aa).

Positions 1-22 (MKTNNHNAKQAQTKTAKSNPSK) are enriched in polar residues. The disordered stretch occupies residues 1 to 51 (MKTNNHNAKQAQTKTAKSNPSKEVTKIKPKRVKNKPTAKAAKSTGLKTNAA). The segment covering 27–36 (IKPKRVKNKP) has biased composition (basic residues).

The protein belongs to the methyltransferase superfamily. METTL16/RlmF family.

The protein localises to the cytoplasm. The catalysed reaction is adenosine(1618) in 23S rRNA + S-adenosyl-L-methionine = N(6)-methyladenosine(1618) in 23S rRNA + S-adenosyl-L-homocysteine + H(+). Specifically methylates the adenine in position 1618 of 23S rRNA. This Vibrio campbellii (strain ATCC BAA-1116) protein is Ribosomal RNA large subunit methyltransferase F.